The chain runs to 418 residues: Ankyrin repeat domain-containing protein 61 (418 aa).

ANK repeat units follow at residues 27-57, 75-104, 132-161, 167-196, 200-229, 234-273, 277-306, and 310-343; these read ALHS…NQPI, ESII…DPEV, NRTH…QVNT, NKRS…DVNA, ASMT…NVNC, TGNT…KVNA, KGQT…NVNI, and NGES…PLRM.

The sequence is that of Ankyrin repeat domain-containing protein 61 (ANKRD61) from Homo sapiens (Human).